The chain runs to 197 residues: MSLQIDAVILAGGMARRMGGDDKGLVELNGKAMIEHTIERIKPQVKEILINANRNQTRYAEFGFTVLSDEHTGFLGPLAGTITAMGHTQADYLLVVPCDCPLLPRDLVARLLAAIEANDAELAVASDGEREQPVVMLLKPSLRESMTAFLEAGERKIDFWYAKHRFAVAAFADQPNAFVNVNTPEQKQRLAAEINQS.

GTP-binding positions include 10–12 (LAG), K23, N51, D69, and D99. Residue D99 coordinates Mg(2+).

Belongs to the MobA family. As to quaternary structure, monomer. Mg(2+) is required as a cofactor.

The protein resides in the cytoplasm. It carries out the reaction Mo-molybdopterin + GTP + H(+) = Mo-molybdopterin guanine dinucleotide + diphosphate. Its function is as follows. Transfers a GMP moiety from GTP to Mo-molybdopterin (Mo-MPT) cofactor (Moco or molybdenum cofactor) to form Mo-molybdopterin guanine dinucleotide (Mo-MGD) cofactor. This Shewanella sp. (strain ANA-3) protein is Molybdenum cofactor guanylyltransferase.